Here is a 326-residue protein sequence, read N- to C-terminus: Eukaryotic translation initiation factor 2 subunit 1 (326 aa).

One can recognise an S1 motif domain in the interval 24–95; the sequence is DDLIMVKVNR…QKGYIDLSKR (72 aa). The residue at position 59 (Ser59) is a Phosphoserine; by eIK1, eIK2 and PK4. The interval 291–326 is disordered; it reads LDKHDGLSSDDEYSSDGDEDDSSNDDDNSSDEDDDD. Positions 298–326 are enriched in acidic residues; it reads SSDDEYSSDGDEDDSSNDDDNSSDEDDDD.

This sequence belongs to the eIF-2-alpha family. Phosphorylates at Ser-59 in mature trophozoites, schizonts and gametocytes but not in rings and young trophozoites. Phosphorylates at Ser-59 by eIK2 in salivary gland sporozoites but not in midgut and hemocoel sporozoites. Dephosphorylated at Ser-59 by UIS2. Phosphorylation of eIF2alpha subunit of the pre-initiation complex eIF2 inhibits recycling of inactive eIF2-GDP to active eIF2-GTP by limiting the activity of the guanine nucleotide exchange factor eIF2B and thus, inhibits protein translation.

Its subcellular location is the cytoplasm. The protein localises to the stress granule. In terms of biological role, functions in the early steps of protein synthesis by forming a ternary complex with GTP and initiator tRNA. May regulate protein translation in response to amino acid starvation. May regulate protein at various stages of parasite development. The protein is Eukaryotic translation initiation factor 2 subunit 1 of Plasmodium berghei (strain Anka).